A 361-amino-acid chain; its full sequence is 3-dehydroquinate synthase (361 aa).

Residues 71-76 (DGEQYK), 105-109 (GVIGD), 129-130 (TT), lysine 142, and lysine 151 each bind NAD(+). Residues glutamate 184, histidine 247, and histidine 264 each coordinate Zn(2+).

This sequence belongs to the sugar phosphate cyclases superfamily. Dehydroquinate synthase family. Co(2+) is required as a cofactor. Requires Zn(2+) as cofactor. The cofactor is NAD(+).

It localises to the cytoplasm. The catalysed reaction is 7-phospho-2-dehydro-3-deoxy-D-arabino-heptonate = 3-dehydroquinate + phosphate. It participates in metabolic intermediate biosynthesis; chorismate biosynthesis; chorismate from D-erythrose 4-phosphate and phosphoenolpyruvate: step 2/7. In terms of biological role, catalyzes the conversion of 3-deoxy-D-arabino-heptulosonate 7-phosphate (DAHP) to dehydroquinate (DHQ). The polypeptide is 3-dehydroquinate synthase (Pectobacterium atrosepticum (strain SCRI 1043 / ATCC BAA-672) (Erwinia carotovora subsp. atroseptica)).